The following is a 406-amino-acid chain: GTPase Obg (406 aa).

The Obg domain maps to 1–159 (MKFVDEVSIH…RDLKLELKVL (159 aa)). The tract at residues 127 to 148 (NTRFKSSTNRAPRQTTPGKPGE) is disordered. The span at 129-143 (RFKSSTNRAPRQTTP) shows a compositional bias: polar residues. The region spanning 160–334 (ADVGLLGLPN…LSQDIMRYLD (175 aa)) is the OBG-type G domain. GTP contacts are provided by residues 166–173 (GLPNAGKS), 191–195 (FTTLV), 213–216 (DIPG), 283–286 (NKMD), and 315–317 (SAL). Mg(2+) contacts are provided by Ser173 and Thr193. Positions 378–406 (GLKNAGAADDDDFDDEEDDGDGPEIFYVP) are disordered. Acidic residues predominate over residues 385–399 (ADDDDFDDEEDDGDG).

It belongs to the TRAFAC class OBG-HflX-like GTPase superfamily. OBG GTPase family. Monomer. The cofactor is Mg(2+).

Its subcellular location is the cytoplasm. Its function is as follows. An essential GTPase which binds GTP, GDP and possibly (p)ppGpp with moderate affinity, with high nucleotide exchange rates and a fairly low GTP hydrolysis rate. Plays a role in control of the cell cycle, stress response, ribosome biogenesis and in those bacteria that undergo differentiation, in morphogenesis control. This is GTPase Obg from Pseudomonas paraeruginosa (strain DSM 24068 / PA7) (Pseudomonas aeruginosa (strain PA7)).